The chain runs to 97 residues: Antitoxin YafN (97 aa).

This sequence belongs to the phD/YefM antitoxin family. Probably forms a complex with the mRNA interferase YafO which inhibits the mRNA interferase activity.

In terms of biological role, antitoxin component of a type II toxin-antitoxin (TA) system. Functions as an mRNA interferase antitoxin; overexpression prevents YafO-mediated cessation of cell growth and inhibition of cell proliferation. The chain is Antitoxin YafN (yafN) from Escherichia coli (strain K12).